The primary structure comprises 436 residues: UPF0597 protein YhaM (436 aa).

It belongs to the UPF0597 family.

The protein is UPF0597 protein YhaM of Shigella boydii serotype 18 (strain CDC 3083-94 / BS512).